Here is a 235-residue protein sequence, read N- to C-terminus: Phosphoribosylaminoimidazole-succinocarboxamide synthase (235 aa).

The protein belongs to the SAICAR synthetase family.

It catalyses the reaction 5-amino-1-(5-phospho-D-ribosyl)imidazole-4-carboxylate + L-aspartate + ATP = (2S)-2-[5-amino-1-(5-phospho-beta-D-ribosyl)imidazole-4-carboxamido]succinate + ADP + phosphate + 2 H(+). It functions in the pathway purine metabolism; IMP biosynthesis via de novo pathway; 5-amino-1-(5-phospho-D-ribosyl)imidazole-4-carboxamide from 5-amino-1-(5-phospho-D-ribosyl)imidazole-4-carboxylate: step 1/2. This is Phosphoribosylaminoimidazole-succinocarboxamide synthase from Thermoanaerobacter pseudethanolicus (strain ATCC 33223 / 39E) (Clostridium thermohydrosulfuricum).